Here is a 166-residue protein sequence, read N- to C-terminus: Large ribosomal subunit protein uL10 (166 aa).

This sequence belongs to the universal ribosomal protein uL10 family. Part of the ribosomal stalk of the 50S ribosomal subunit. The N-terminus interacts with L11 and the large rRNA to form the base of the stalk. The C-terminus forms an elongated spine to which L12 dimers bind in a sequential fashion forming a multimeric L10(L12)X complex.

Forms part of the ribosomal stalk, playing a central role in the interaction of the ribosome with GTP-bound translation factors. This chain is Large ribosomal subunit protein uL10, found in Shouchella clausii (strain KSM-K16) (Alkalihalobacillus clausii).